The sequence spans 141 residues: Large ribosomal subunit protein uL22 (141 aa).

Belongs to the universal ribosomal protein uL22 family. Part of the 50S ribosomal subunit.

Functionally, this protein binds specifically to 23S rRNA; its binding is stimulated by other ribosomal proteins, e.g. L4, L17, and L20. It is important during the early stages of 50S assembly. It makes multiple contacts with different domains of the 23S rRNA in the assembled 50S subunit and ribosome. Its function is as follows. The globular domain of the protein is located near the polypeptide exit tunnel on the outside of the subunit, while an extended beta-hairpin is found that lines the wall of the exit tunnel in the center of the 70S ribosome. This Frankia casuarinae (strain DSM 45818 / CECT 9043 / HFP020203 / CcI3) protein is Large ribosomal subunit protein uL22.